The sequence spans 231 residues: 5'-methylthioadenosine/S-adenosylhomocysteine nucleosidase (231 aa).

E12 acts as the Proton acceptor in catalysis. Substrate-binding positions include G78, M153, and M174 to E175. The Proton donor role is filled by D198.

The protein belongs to the PNP/UDP phosphorylase family. MtnN subfamily.

It catalyses the reaction S-adenosyl-L-homocysteine + H2O = S-(5-deoxy-D-ribos-5-yl)-L-homocysteine + adenine. It carries out the reaction S-methyl-5'-thioadenosine + H2O = 5-(methylsulfanyl)-D-ribose + adenine. The catalysed reaction is 5'-deoxyadenosine + H2O = 5-deoxy-D-ribose + adenine. The protein operates within amino-acid biosynthesis; L-methionine biosynthesis via salvage pathway; S-methyl-5-thio-alpha-D-ribose 1-phosphate from S-methyl-5'-thioadenosine (hydrolase route): step 1/2. In terms of biological role, catalyzes the irreversible cleavage of the glycosidic bond in both 5'-methylthioadenosine (MTA) and S-adenosylhomocysteine (SAH/AdoHcy) to adenine and the corresponding thioribose, 5'-methylthioribose and S-ribosylhomocysteine, respectively. Also cleaves 5'-deoxyadenosine, a toxic by-product of radical S-adenosylmethionine (SAM) enzymes, into 5-deoxyribose and adenine. The chain is 5'-methylthioadenosine/S-adenosylhomocysteine nucleosidase from Bacillus licheniformis (strain ATCC 14580 / DSM 13 / JCM 2505 / CCUG 7422 / NBRC 12200 / NCIMB 9375 / NCTC 10341 / NRRL NRS-1264 / Gibson 46).